The chain runs to 98 residues: Growth-regulated protein homolog gamma (98 aa).

The N-terminal stretch at 1–29 (MAPAASSAPRLLRAAMLLLLLVAAGRRAA) is a signal peptide. Cystine bridges form between C39–C65 and C41–C81.

This sequence belongs to the intercrine alpha (chemokine CxC) family.

It localises to the secreted. The polypeptide is Growth-regulated protein homolog gamma (Bos taurus (Bovine)).